A 283-amino-acid chain; its full sequence is Release factor glutamine methyltransferase (283 aa).

S-adenosyl-L-methionine-binding positions include 121-125 (GTGSG), Asp144, and Asn188. Substrate is bound at residue 188 to 191 (NPPY).

This sequence belongs to the protein N5-glutamine methyltransferase family. PrmC subfamily.

The enzyme catalyses L-glutaminyl-[peptide chain release factor] + S-adenosyl-L-methionine = N(5)-methyl-L-glutaminyl-[peptide chain release factor] + S-adenosyl-L-homocysteine + H(+). Methylates the class 1 translation termination release factors RF1/PrfA and RF2/PrfB on the glutamine residue of the universally conserved GGQ motif. The protein is Release factor glutamine methyltransferase of Bacillus anthracis.